Consider the following 1192-residue polypeptide: Probable ATP-dependent RNA helicase kurz (1192 aa).

The interval 170–214 (ELQAKRKNPNVISVEEDDEDSSSSDEDDEEAPAQSAPIAIPTPVS) is disordered. Residues 183 to 200 (VEEDDEDSSSSDEDDEEA) are compositionally biased toward acidic residues. The 167-residue stretch at 270 to 436 (METINENPIV…TRLFKIPPPL (167 aa)) folds into the Helicase ATP-binding domain. An ATP-binding site is contributed by 283–290 (GETGSGKT). The DEAH box motif lies at 379 to 382 (DEAH). Residues 504–529 (APTKDVAKNGKVSEEEKEETIDDAAS) form a disordered region. Over residues 505 to 517 (PTKDVAKNGKVSE) the composition is skewed to basic and acidic residues. Serine 529 carries the phosphoserine modification. Residue threonine 530 is modified to Phosphothreonine. The region spanning 540-746 (DMKRVIRNIR…DLMLQMRCMG (207 aa)) is the Helicase C-terminal domain. The segment covering 567–583 (DDYKLPGDDTEADMHEQ) has biased composition (basic and acidic residues). A disordered region spans residues 567–612 (DDYKLPGDDTEADMHEQPDEDDEQEGLEEDNDDELGLEDESGMGSG). Over residues 584 to 607 (PDEDDEQEGLEEDNDDELGLEDES) the composition is skewed to acidic residues.

Belongs to the DEAD box helicase family. DEAH subfamily.

It carries out the reaction ATP + H2O = ADP + phosphate + H(+). This chain is Probable ATP-dependent RNA helicase kurz (kz), found in Drosophila melanogaster (Fruit fly).